Here is a 203-residue protein sequence, read N- to C-terminus: Serine hydrolase-like protein (203 aa).

In terms of domain architecture, AB hydrolase-1 spans 33–145; sequence PPVLCLHGWL…FLLESDEMEN (113 aa). Ser108 is an active-site residue.

It belongs to the AB hydrolase superfamily.

In terms of biological role, putative serine hydrolase. The chain is Serine hydrolase-like protein (SERHL) from Homo sapiens (Human).